Reading from the N-terminus, the 170-residue chain is Protein ECM34 (170 aa).

Asn-45 carries an N-linked (GlcNAc...) asparagine glycan. 2 helical membrane-spanning segments follow: residues 51-71 (IWLLLCLTLIVGWKVFSGIGG) and 98-118 (TIVILVISLAVSFSWEAFKMY).

It belongs to the DUP/COS family.

The protein localises to the membrane. Functionally, may be involved in cell wall organization and biogenesis. The protein is Protein ECM34 (ECM34) of Saccharomyces cerevisiae (strain ATCC 204508 / S288c) (Baker's yeast).